The following is a 303-amino-acid chain: Recombination-associated protein RdgC (303 aa).

It belongs to the RdgC family.

The protein resides in the cytoplasm. The protein localises to the nucleoid. In terms of biological role, may be involved in recombination. The sequence is that of Recombination-associated protein RdgC from Shewanella halifaxensis (strain HAW-EB4).